Here is a 544-residue protein sequence, read N- to C-terminus: Chaperonin GroEL (544 aa).

ATP is bound by residues T29–P32, D86–T90, G413, N476–A478, and D492.

Belongs to the chaperonin (HSP60) family. In terms of assembly, forms a cylinder of 14 subunits composed of two heptameric rings stacked back-to-back. Interacts with the co-chaperonin GroES.

The protein localises to the cytoplasm. It catalyses the reaction ATP + H2O + a folded polypeptide = ADP + phosphate + an unfolded polypeptide.. Together with its co-chaperonin GroES, plays an essential role in assisting protein folding. The GroEL-GroES system forms a nano-cage that allows encapsulation of the non-native substrate proteins and provides a physical environment optimized to promote and accelerate protein folding. The chain is Chaperonin GroEL from Halalkalibacterium halodurans (strain ATCC BAA-125 / DSM 18197 / FERM 7344 / JCM 9153 / C-125) (Bacillus halodurans).